We begin with the raw amino-acid sequence, 317 residues long: Ribosomal RNA small subunit methyltransferase A (317 aa).

Residues N37, V39, G64, E85, D115, and N134 each coordinate S-adenosyl-L-methionine. The disordered stretch occupies residues 293-317 (GGSDEATSTGRDARAPDISGHASAS).

Belongs to the class I-like SAM-binding methyltransferase superfamily. rRNA adenine N(6)-methyltransferase family. RsmA subfamily.

The protein localises to the cytoplasm. The catalysed reaction is adenosine(1518)/adenosine(1519) in 16S rRNA + 4 S-adenosyl-L-methionine = N(6)-dimethyladenosine(1518)/N(6)-dimethyladenosine(1519) in 16S rRNA + 4 S-adenosyl-L-homocysteine + 4 H(+). In terms of biological role, specifically dimethylates two adjacent adenosines (A1518 and A1519) in the loop of a conserved hairpin near the 3'-end of 16S rRNA in the 30S particle. May play a critical role in biogenesis of 30S subunits. This chain is Ribosomal RNA small subunit methyltransferase A, found in Mycobacterium bovis (strain BCG / Tokyo 172 / ATCC 35737 / TMC 1019).